The sequence spans 392 residues: MSVIKLVDLDLKNKRVFIRSDLNVPVKEGKVTSDARITASMATINHCLKQGARVMVTSHLGRPEEGVWAMENSLQPVANDISRRLGTTVRLIKDWVDGGFEVAPGELVILENCRINKGEKKNLEETAKKYANLCDVFVMDAFGTAHRAEASTHGVAKYAPVACAGILLTEELDALTKALHQPARPLVAIVGGSKVSTKLTVLESLTEKVDQLVVGGGIANTFLKAAGNNVGKSLCEDELVPIAKSLMDKMNQRNATIPIAIDVVVGKKFAADEPAVLKEANAVSDDDMIFDIGPKSTQELVNIIMKAGTVVWNGPVGVFEFDQFGEGTHAIAKAIAETDAFTLAGGGDTIAAIQKYDIYDKVSYISTAGGAFLEFLEGKKLPAVEILELRAQ.

Residues 21 to 23 (DLN), Arg-36, 59 to 62 (HLGR), Arg-114, and Arg-147 contribute to the substrate site. ATP is bound by residues Lys-198, Glu-320, and 346 to 349 (GGDT).

The protein belongs to the phosphoglycerate kinase family. Monomer.

Its subcellular location is the cytoplasm. The catalysed reaction is (2R)-3-phosphoglycerate + ATP = (2R)-3-phospho-glyceroyl phosphate + ADP. It functions in the pathway carbohydrate degradation; glycolysis; pyruvate from D-glyceraldehyde 3-phosphate: step 2/5. The polypeptide is Phosphoglycerate kinase (Nitrosomonas eutropha (strain DSM 101675 / C91 / Nm57)).